A 498-amino-acid polypeptide reads, in one-letter code: Heat stress transcription factor A-3 (498 aa).

Residues 156–180 form a disordered region; the sequence is RRRSSPTQQSGLQPGSSGESGLDPE. Positions 160–174 are enriched in polar residues; that stretch reads SPTQQSGLQPGSSGE. The stretch at 180–235 forms a coiled coil; sequence ELNTLRREKSALLQEVTRLKQEHLQTIEQMSTLNQRLESAEDRQKQMVSFLAKLLQ. The hydrophobic repeat HR-A/B stretch occupies residues 184 to 234; that stretch reads LRREKSALLQEVTRLKQEHLQTIEQMSTLNQRLESAEDRQKQMVSFLAKLL. The Nuclear localization signal signature appears at 258–263; that stretch reads KRKFLK. Residues 263-291 form a disordered region; the sequence is KHVPHGNIDSGESSSQHTGESNLDFSPTS. A compositionally biased stretch (polar residues) spans 272–291; that stretch reads SGESSSQHTGESNLDFSPTS. The Nuclear export signal signature appears at 309-316; it reads LEDGDLNL. Residues 356–382 form a disordered region; sequence LEIPPASGPRGQDPTIGRSKGKNVLSP.

The protein belongs to the HSF family. Class A subfamily. Homotrimer. In terms of processing, exhibits temperature-dependent phosphorylation.

The protein resides in the cytoplasm. It localises to the nucleus. Transcriptional regulator that specifically binds DNA of heat shock promoter elements (HSE). In Oryza sativa subsp. japonica (Rice), this protein is Heat stress transcription factor A-3 (HSFA3).